Here is a 199-residue protein sequence, read N- to C-terminus: Protein PPP1R35 homolog (199 aa).

Positions 1–11 (MPHKRRNRVHA) are enriched in basic residues. Disordered regions lie at residues 1–23 (MPHK…RVSV) and 36–60 (ESCN…AMTN). The segment covering 38-49 (CNGSHADNSSPD) has biased composition (polar residues).

Belongs to the PPP1R35 family. In terms of assembly, interacts with Ana3; this complex is recruited to daughter centrioles before their conversion to centrosomes.

Its subcellular location is the cytoplasm. It is found in the cytoskeleton. It localises to the microtubule organizing center. The protein resides in the centrosome. The protein localises to the centriole. Participates in the later stages of centriole assembly through the interaction with Ana3 leading to the centriole to centrosome conversion in somatic cells. The chain is Protein PPP1R35 homolog from Drosophila melanogaster (Fruit fly).